Here is a 397-residue protein sequence, read N- to C-terminus: Guanine nucleotide-binding protein G(s) subunit alpha (397 aa).

Residues Met1–Asn23 are disordered. A lipid anchor (N-palmitoyl glycine) is attached at Gly2. Cys3 carries S-palmitoyl cysteine lipidation. Basic and acidic residues predominate over residues Lys8–Asn23. The 359-residue stretch at Ala39–Leu397 folds into the G-alpha domain. The segment at Arg42–Thr55 is G1 motif. GTP contacts are provided by residues Gly47–Thr55, Leu182–Thr189, Asp208–Gln212, Asn277–Asp280, and Ala369. Residues Ser54 and Thr189 each contribute to the Mg(2+) site. Residues Asp181–Thr189 form a G2 motif region. Residues Phe204–Arg213 are G3 motif. Residues Ile273–Asp280 are G4 motif. Positions Thr367–Thr372 are G5 motif.

This sequence belongs to the G-alpha family. G(s) subfamily. Heterotrimeric G proteins are composed of 3 units; alpha, beta and gamma. The alpha chain contains the guanine nucleotide binding site. Interacts with CRY1; the interaction may block GPCR-mediated regulation of cAMP concentrations. Interacts with ADCY6 and stimulates its adenylyl cyclase activity. Interacts with ADCY2 and ADCY5. Stimulates the ADCY5 adenylyl cyclase activity. Interaction with SASH1.

The protein localises to the cell membrane. Its function is as follows. Guanine nucleotide-binding proteins (G proteins) function as transducers in numerous signaling pathways controlled by G protein-coupled receptors (GPCRs). Signaling involves the activation of adenylyl cyclases, resulting in increased levels of the signaling molecule cAMP. GNAS functions downstream of several GPCRs, including beta-adrenergic receptors. Stimulates the Ras signaling pathway via RAPGEF2. The sequence is that of Guanine nucleotide-binding protein G(s) subunit alpha (GNAS) from Sus scrofa (Pig).